We begin with the raw amino-acid sequence, 901 residues long: Protein SOK1 (901 aa).

3 disordered regions span residues 1–87 (MDQP…QNII), 106–139 (RSSG…SDLK), and 162–231 (NDDN…NASN). Residues 10-51 (PTTASNPAPSSTNSSSAPSATNSKQERSSSSLSKPSSVVPSK) are compositionally biased toward low complexity. A phosphoserine mark is found at serine 40 and serine 53. Composition is skewed to polar residues over residues 74–87 (GDTS…QNII) and 106–115 (RSSGVITPSM). Low complexity predominate over residues 116–138 (SLNASTNATNNDSSGNSANSSDL). 2 positions are modified to phosphoserine: serine 191 and serine 193. Polar residues predominate over residues 220–231 (AAQQQPPGNASN). Serine 245 is subject to Phosphoserine.

It belongs to the TCP11 family.

Its subcellular location is the nucleus. High copy suppressor of a cyclic AMP-dependent protein kinase mutant. This Saccharomyces cerevisiae (strain ATCC 204508 / S288c) (Baker's yeast) protein is Protein SOK1 (SOK1).